The following is a 407-amino-acid chain: Phosphonoacetate hydrolase (407 aa).

Residues aspartate 25, threonine 64, aspartate 202, histidine 206, aspartate 241, histidine 242, and histidine 368 each coordinate Zn(2+). Threonine 64 and aspartate 202 together coordinate substrate. The substrate site is built by histidine 242 and histidine 368.

Belongs to the alkaline phosphatase family. PhnA subfamily. In terms of assembly, homodimer. Zn(2+) is required as a cofactor.

It carries out the reaction phosphonoacetate + H2O = acetate + phosphate + H(+). In terms of biological role, specifically hydrolyzes phosphonoacetate. Does not have activity on other organophosphonates or acetates. The protein is Phosphonoacetate hydrolase of Pseudomonas cedrina.